The sequence spans 389 residues: MGYQAFTVQDAIERVRTLGLIGNEPVTAEEIGDGNLNLVFRIQAGEKRLILKQALPYAKVVGESWPLSLERAWIEQSALKEFAKVAVPFVPHVYHASKEEAFTVMEDLSHLTIVRGGLLEGEKYPLLAEHIGSYLARTLFYTSDFAVGPVAKKQIARQYYNPDLCDITEKLIFTDPFYDAETNAIEAGLEAEVDRIWNDAELKREVAKLEALFITKGDALLHGDLHTGSIFASAEETKVIDPEFAFYGPFGFDVGQFIAHLFFAAYPDYDRLRDERIKDIDTFWLTFASTFKALWEREAVEPFRKADGLVDDVLSTILQDALGFAGCELIRRTIGLALVADLEQISDSTVRLERKRHALRLGAALIKRRTECKTFTDLRNFDVTEELSR.

ATP-binding positions include Asn37, Lys52, and 106–108; that span reads EDL. Asp224 lines the substrate pocket. ATP is bound at residue 241-243; sequence DPE. Position 331 (Arg331) interacts with substrate.

Belongs to the methylthioribose kinase family. In terms of assembly, homodimer.

It carries out the reaction 5-(methylsulfanyl)-D-ribose + ATP = 5-(methylsulfanyl)-alpha-D-ribose 1-phosphate + ADP + H(+). Its pathway is amino-acid biosynthesis; L-methionine biosynthesis via salvage pathway; S-methyl-5-thio-alpha-D-ribose 1-phosphate from S-methyl-5'-thioadenosine (hydrolase route): step 2/2. Its function is as follows. Catalyzes the phosphorylation of methylthioribose into methylthioribose-1-phosphate. This chain is Methylthioribose kinase, found in Exiguobacterium sibiricum (strain DSM 17290 / CCUG 55495 / CIP 109462 / JCM 13490 / 255-15).